A 283-amino-acid polypeptide reads, in one-letter code: Phosphatidylglycerol--prolipoprotein diacylglyceryl transferase (283 aa).

Helical transmembrane passes span 20–40, 51–71, 97–117, and 123–143; these read LGPVPIRAYALCIIVGIFVAM, GGNPDLVIDAGIVAVIAGIIG, ITNGGLGIWGAVALGTIAVYF, and GVAFALFADAVAPGIILAQAI. Position 145 (R145) interacts with a 1,2-diacyl-sn-glycero-3-phospho-(1'-sn-glycerol). A run of 2 helical transmembrane segments spans residues 192 to 212 and 255 to 275; these read VHPTFLYEMIWNLVIFAVLLW and INVIVSVVVCAIAVGALFALR.

Belongs to the Lgt family.

Its subcellular location is the cell membrane. It catalyses the reaction L-cysteinyl-[prolipoprotein] + a 1,2-diacyl-sn-glycero-3-phospho-(1'-sn-glycerol) = an S-1,2-diacyl-sn-glyceryl-L-cysteinyl-[prolipoprotein] + sn-glycerol 1-phosphate + H(+). The protein operates within protein modification; lipoprotein biosynthesis (diacylglyceryl transfer). Its function is as follows. Catalyzes the transfer of the diacylglyceryl group from phosphatidylglycerol to the sulfhydryl group of the N-terminal cysteine of a prolipoprotein, the first step in the formation of mature lipoproteins. The chain is Phosphatidylglycerol--prolipoprotein diacylglyceryl transferase from Corynebacterium diphtheriae (strain ATCC 700971 / NCTC 13129 / Biotype gravis).